Here is a 338-residue protein sequence, read N- to C-terminus: tRNA N6-adenosine threonylcarbamoyltransferase (338 aa).

The Fe cation site is built by His-109 and His-113. Substrate-binding positions include 132 to 136 (AISGA), Asp-165, Gly-178, and Asn-277. Asp-302 lines the Fe cation pocket.

This sequence belongs to the KAE1 / TsaD family. It depends on Fe(2+) as a cofactor.

It is found in the cytoplasm. It catalyses the reaction L-threonylcarbamoyladenylate + adenosine(37) in tRNA = N(6)-L-threonylcarbamoyladenosine(37) in tRNA + AMP + H(+). In terms of biological role, required for the formation of a threonylcarbamoyl group on adenosine at position 37 (t(6)A37) in tRNAs that read codons beginning with adenine. Is involved in the transfer of the threonylcarbamoyl moiety of threonylcarbamoyl-AMP (TC-AMP) to the N6 group of A37, together with TsaE and TsaB. TsaD likely plays a direct catalytic role in this reaction. This chain is tRNA N6-adenosine threonylcarbamoyltransferase, found in Chlamydia trachomatis serovar A (strain ATCC VR-571B / DSM 19440 / HAR-13).